A 298-amino-acid polypeptide reads, in one-letter code: MSAQNSLFSGSIVALVTPMNHYGEVDFSCLEKLVEHHIEAGSNALVSVGTTGESATLSIEENVKVIEKTVEFAKGRIPIIAGAGANATSEAITMTKLLRDSGVAGCLSVVPYYNKPTQEGMYQHFKAIAECTDLPQILYNVPSRTGSDMKPETVARLAEIENIVGIKEATRDVSRIVKIKQLAGKNFIVLSGDDATGLEAIKLGAEGVISVTNNIAAKDMADMCRYALAGDFDKAEEINARLMRLHHDLFIESNPIPVKWAAYRLGLIKSPHLRLPLTTLSEEIQPKVGDALKIAGLL.

Thr51 provides a ligand contact to pyruvate. Catalysis depends on Tyr139, which acts as the Proton donor/acceptor. Lys167 functions as the Schiff-base intermediate with substrate in the catalytic mechanism. Ile209 contributes to the pyruvate binding site.

It belongs to the DapA family. In terms of assembly, homotetramer; dimer of dimers.

It localises to the cytoplasm. The catalysed reaction is L-aspartate 4-semialdehyde + pyruvate = (2S,4S)-4-hydroxy-2,3,4,5-tetrahydrodipicolinate + H2O + H(+). Its pathway is amino-acid biosynthesis; L-lysine biosynthesis via DAP pathway; (S)-tetrahydrodipicolinate from L-aspartate: step 3/4. Its function is as follows. Catalyzes the condensation of (S)-aspartate-beta-semialdehyde [(S)-ASA] and pyruvate to 4-hydroxy-tetrahydrodipicolinate (HTPA). This Haemophilus influenzae (strain ATCC 51907 / DSM 11121 / KW20 / Rd) protein is 4-hydroxy-tetrahydrodipicolinate synthase.